The chain runs to 102 residues: Small ribosomal subunit protein uS10 (102 aa).

The tract at residues 34 to 58 is disordered; sequence VSGPVPLPTKTLEVPSRKSPDGEGT.

Belongs to the universal ribosomal protein uS10 family. In terms of assembly, part of the 30S ribosomal subunit.

Its function is as follows. Involved in the binding of tRNA to the ribosomes. This is Small ribosomal subunit protein uS10 from Halobacterium salinarum (strain ATCC 29341 / DSM 671 / R1).